A 355-amino-acid polypeptide reads, in one-letter code: Glucose-1-phosphate thymidylyltransferase (355 aa).

Positions 107 and 220 each coordinate Mg(2+).

Belongs to the glucose-1-phosphate thymidylyltransferase family. Requires Mg(2+) as cofactor.

The enzyme catalyses dTTP + alpha-D-glucose 1-phosphate + H(+) = dTDP-alpha-D-glucose + diphosphate. Its pathway is antibiotic biosynthesis; streptomycin biosynthesis. In terms of biological role, involved in the biosynthesis of the streptose moiety of streptomycin. Catalyzes the formation of dTDP-glucose, from dTTP and glucose 1-phosphate, as well as its pyrophosphorolysis. The chain is Glucose-1-phosphate thymidylyltransferase (strD) from Streptomyces griseus.